A 360-amino-acid polypeptide reads, in one-letter code: MTTTLQQRSSANVWERFCTWITSTENRIYVGWFGVLMIPTLLAATVCFIIAFVAAPPVDIDGIREPVAGSLIYGNNIISGAVVPSSNAIGLHFYPIWEAASLDEWLYNGGPYQLVIFHFLIGCACYLGRQWELSYRLGMRPWICVAYSAPLASATAVFLIYPIGQGSFSDGMPLGISGTFNFMIVFQAEHNILMHPFHMLGVAGVFGGSLFSAMHGSLVTSSLVRETTEIESQNYGYKFGQEEETYNIVAAHGYFGRLIFQYASFNNSRQLHFFLAAWPVIGIWFTALGVSTMAFNLNGFNFNQSIIDSQGRVINTWADIINRANLGMEVMHERNAHNFPLDLAAGEVAPVALTAPAING.

A run of 3 helical transmembrane segments spans residues 29–46, 118–133, and 142–156; these read YVGWFGVLMIPTLLAATV, HFLIGCACYLGRQWEL, and WICVAYSAPLASATA. A chlorophyll a-binding site is contributed by His-118. Tyr-126 provides a ligand contact to pheophytin a. Residues Asp-170 and Glu-189 each coordinate [CaMn4O5] cluster. The chain crosses the membrane as a helical span at residues 197-218; the sequence is FHMLGVAGVFGGSLFSAMHGSL. His-198 contributes to the chlorophyll a binding site. Residues His-215 and 264–265 each bind a quinone; that span reads SF. Residue His-215 participates in Fe cation binding. His-272 contributes to the Fe cation binding site. The chain crosses the membrane as a helical span at residues 274-288; that stretch reads FLAAWPVIGIWFTAL. [CaMn4O5] cluster-binding residues include His-332, Glu-333, Asp-342, and Ala-344. Positions 345 to 360 are excised as a propeptide; that stretch reads AGEVAPVALTAPAING.

This sequence belongs to the reaction center PufL/M/PsbA/D family. In terms of assembly, PSII is composed of 1 copy each of membrane proteins PsbA, PsbB, PsbC, PsbD, PsbE, PsbF, PsbH, PsbI, PsbJ, PsbK, PsbL, PsbM, PsbT, PsbX, PsbY, PsbZ, Psb30/Ycf12, peripheral proteins PsbO, CyanoQ (PsbQ), PsbU, PsbV and a large number of cofactors. It forms dimeric complexes. The D1/D2 heterodimer binds P680, chlorophylls that are the primary electron donor of PSII, and subsequent electron acceptors. It shares a non-heme iron and each subunit binds pheophytin, quinone, additional chlorophylls, carotenoids and lipids. D1 provides most of the ligands for the Mn4-Ca-O5 cluster of the oxygen-evolving complex (OEC). There is also a Cl(-1) ion associated with D1 and D2, which is required for oxygen evolution. The PSII complex binds additional chlorophylls, carotenoids and specific lipids. serves as cofactor. Post-translationally, tyr-161 forms a radical intermediate that is referred to as redox-active TyrZ, YZ or Y-Z. In terms of processing, C-terminally processed by CtpA; processing is essential to allow assembly of the oxygen-evolving complex and thus photosynthetic growth.

The protein resides in the cellular thylakoid membrane. The enzyme catalyses 2 a plastoquinone + 4 hnu + 2 H2O = 2 a plastoquinol + O2. In terms of biological role, photosystem II (PSII) is a light-driven water:plastoquinone oxidoreductase that uses light energy to abstract electrons from H(2)O, generating O(2) and a proton gradient subsequently used for ATP formation. It consists of a core antenna complex that captures photons, and an electron transfer chain that converts photonic excitation into a charge separation. The D1/D2 (PsbA/PsbD) reaction center heterodimer binds P680, the primary electron donor of PSII as well as several subsequent electron acceptors. The protein is Photosystem II protein D1 1 of Nostoc sp. (strain PCC 7120 / SAG 25.82 / UTEX 2576).